The primary structure comprises 216 residues: Phosphatidylserine decarboxylase proenzyme (216 aa).

The active-site Schiff-base intermediate with substrate; via pyruvic acid is serine 182. Residue serine 182 is modified to Pyruvic acid (Ser); by autocatalysis.

Belongs to the phosphatidylserine decarboxylase family. PSD-A subfamily. In terms of assembly, heterodimer of a large membrane-associated beta subunit and a small pyruvoyl-containing alpha subunit. It depends on pyruvate as a cofactor. Is synthesized initially as an inactive proenzyme. Formation of the active enzyme involves a self-maturation process in which the active site pyruvoyl group is generated from an internal serine residue via an autocatalytic post-translational modification. Two non-identical subunits are generated from the proenzyme in this reaction, and the pyruvate is formed at the N-terminus of the alpha chain, which is derived from the carboxyl end of the proenzyme. The post-translation cleavage follows an unusual pathway, termed non-hydrolytic serinolysis, in which the side chain hydroxyl group of the serine supplies its oxygen atom to form the C-terminus of the beta chain, while the remainder of the serine residue undergoes an oxidative deamination to produce ammonia and the pyruvoyl prosthetic group on the alpha chain.

It localises to the cell membrane. It catalyses the reaction a 1,2-diacyl-sn-glycero-3-phospho-L-serine + H(+) = a 1,2-diacyl-sn-glycero-3-phosphoethanolamine + CO2. Its pathway is phospholipid metabolism; phosphatidylethanolamine biosynthesis; phosphatidylethanolamine from CDP-diacylglycerol: step 2/2. Catalyzes the formation of phosphatidylethanolamine (PtdEtn) from phosphatidylserine (PtdSer). The protein is Phosphatidylserine decarboxylase proenzyme of Burkholderia pseudomallei (strain 1106a).